Reading from the N-terminus, the 677-residue chain is Transcription factor IIIB 90 kDa subunit (677 aa).

The segment at 2-33 (TGRVCRGCGGTDIELDAARGDAVCTACGSVLE) adopts a TFIIB-type zinc-finger fold. Residues Cys6, Cys9, Cys25, and Cys28 each contribute to the Zn(2+) site. 2 consecutive repeat copies span residues 91 to 172 (RHIH…LLAR) and 185 to 269 (LYIP…EFED). Disordered stretches follow at residues 340–368 (KGGL…TEDE) and 385–413 (LLGG…SLLD). Thr365 bears the Phosphothreonine mark. Ser450 is modified (phosphoserine). Disordered stretches follow at residues 501-521 (YKEH…ASTA) and 544-653 (RGLS…EDGE). The residue at position 553 (Ser553) is a Phosphoserine. The span at 640–653 (EEADEEEPDEEDGE) shows a compositional bias: acidic residues.

It belongs to the TFIIB family. In terms of assembly, TFIIIB comprises at least the TATA-binding protein (TBP) and the B-related factor 1 (BRF1/TFIIIB90). Interacts with BDP1. Interacts with MAF1.

The protein resides in the nucleus. Functionally, general activator of RNA polymerase which utilizes different TFIIIB complexes at structurally distinct promoters. The isoform 1 is involved in the transcription of tRNA, adenovirus VA1, 7SL and 5S RNA. Isoform 2 is required for transcription of the U6 promoter. In Homo sapiens (Human), this protein is Transcription factor IIIB 90 kDa subunit (BRF1).